Consider the following 292-residue polypeptide: Elongation factor Ts (292 aa).

The interval 80 to 83 (TDFV) is involved in Mg(2+) ion dislocation from EF-Tu.

Belongs to the EF-Ts family.

It is found in the cytoplasm. In terms of biological role, associates with the EF-Tu.GDP complex and induces the exchange of GDP to GTP. It remains bound to the aminoacyl-tRNA.EF-Tu.GTP complex up to the GTP hydrolysis stage on the ribosome. This is Elongation factor Ts from Psychrobacter sp. (strain PRwf-1).